The primary structure comprises 382 residues: Galactose-1-phosphate uridylyltransferase (382 aa).

C52 and C55 together coordinate Zn(2+). Residues A61 and 77–78 (ND) each bind UDP-alpha-D-glucose. Residue H121 participates in Zn(2+) binding. N185 provides a ligand contact to UDP-alpha-D-glucose. H196 contributes to the Zn(2+) binding site. The Tele-UMP-histidine intermediate role is filled by H198. Residue Q200 participates in UDP-alpha-D-glucose binding. Fe cation-binding residues include E214, H313, H330, and H332. UDP-alpha-D-glucose is bound by residues 345-348 (KFLV) and 350-351 (FE).

This sequence belongs to the galactose-1-phosphate uridylyltransferase type 1 family. In terms of assembly, homodimer. The cofactor is Zn(2+).

It catalyses the reaction alpha-D-galactose 1-phosphate + UDP-alpha-D-glucose = alpha-D-glucose 1-phosphate + UDP-alpha-D-galactose. Its pathway is carbohydrate metabolism; galactose metabolism. Functionally, essential for growth on galactose but not for cellulase induction. This Hypocrea jecorina (Trichoderma reesei) protein is Galactose-1-phosphate uridylyltransferase (gal7).